Reading from the N-terminus, the 509-residue chain is Steroid 17-alpha-hydroxylase/17,20 lyase (509 aa).

Asn-202 lines the substrate pocket. Cys-442 provides a ligand contact to heme.

Belongs to the cytochrome P450 family. Requires heme as cofactor.

The protein resides in the endoplasmic reticulum membrane. Its subcellular location is the microsome membrane. It catalyses the reaction a C21-steroid + reduced [NADPH--hemoprotein reductase] + O2 = a 17alpha-hydroxy-C21-steroid + oxidized [NADPH--hemoprotein reductase] + H2O + H(+). The catalysed reaction is progesterone + reduced [NADPH--hemoprotein reductase] + O2 = 17alpha-hydroxyprogesterone + oxidized [NADPH--hemoprotein reductase] + H2O + H(+). The enzyme catalyses pregnenolone + reduced [NADPH--hemoprotein reductase] + O2 = 17alpha-hydroxypregnenolone + oxidized [NADPH--hemoprotein reductase] + H2O + H(+). It carries out the reaction 17alpha-hydroxyprogesterone + reduced [NADPH--hemoprotein reductase] + O2 = androst-4-ene-3,17-dione + acetate + oxidized [NADPH--hemoprotein reductase] + H2O + 2 H(+). It catalyses the reaction 17alpha-hydroxyprogesterone + reduced [NADPH--hemoprotein reductase] + O2 = 16alpha,17alpha-dihydroxyprogesterone + oxidized [NADPH--hemoprotein reductase] + H2O + H(+). The catalysed reaction is 16alpha,17alpha-dihydroxyprogesterone + reduced [NADPH--hemoprotein reductase] + O2 = 6beta,16alpha,17alpha-trihydroxyprogesterone + oxidized [NADPH--hemoprotein reductase] + H2O + H(+). The enzyme catalyses 17alpha-hydroxypregnenolone + reduced [NADPH--hemoprotein reductase] + O2 = 3beta-hydroxyandrost-5-en-17-one + acetate + oxidized [NADPH--hemoprotein reductase] + H2O + 2 H(+). It carries out the reaction 16alpha,17alpha-dihydroxypregnenolone + reduced [NADPH--hemoprotein reductase] + O2 = 3beta,16alpha-dihydroxy-androst-5-en-17-one + acetate + oxidized [NADPH--hemoprotein reductase] + H2O + 2 H(+). It catalyses the reaction 3beta-hydroxyandrost-5-en-17-one + reduced [NADPH--hemoprotein reductase] + O2 = 3beta,16alpha-dihydroxy-androst-5-en-17-one + oxidized [NADPH--hemoprotein reductase] + H2O + H(+). The catalysed reaction is androst-4-ene-3,17-dione + reduced [NADPH--hemoprotein reductase] + O2 = 16alpha-hydroxyandrost-4-ene-3,17-dione + oxidized [NADPH--hemoprotein reductase] + H2O + H(+). It functions in the pathway steroid hormone biosynthesis. It participates in steroid biosynthesis; glucocorticoid biosynthesis. Regulated predominantly by intracellular cAMP levels. The 17,20-lyase activity is stimulated by cytochrome b5, which acts as an allosteric effector increasing the Vmax of the lyase activity. Functionally, a cytochrome P450 monooxygenase involved in corticoid and androgen biosynthesis. Catalyzes 17-alpha hydroxylation of C21 steroids, which is common for both pathways. A second oxidative step, required only for androgen synthesis, involves an acyl-carbon cleavage. The 17-alpha hydroxy intermediates, as part of adrenal glucocorticoids biosynthesis pathway, are precursors of cortisol. Hydroxylates steroid hormones, pregnenolone and progesterone to form 17-alpha hydroxy metabolites, followed by the cleavage of the C17-C20 bond to form C19 steroids, dehydroepiandrosterone (DHEA) and androstenedione. Has 16-alpha hydroxylase activity. Catalyzes 16-alpha hydroxylation of 17-alpha hydroxy pregnenolone, followed by the cleavage of the C17-C20 bond to form 16-alpha-hydroxy DHEA. Also 16-alpha hydroxylates androgens, relevant for estriol synthesis. Mechanistically, uses molecular oxygen inserting one oxygen atom into a substrate, and reducing the second into a water molecule, with two electrons provided by NADPH via cytochrome P450 reductase (CPR; NADPH-ferrihemoprotein reductase). In Sus scrofa (Pig), this protein is Steroid 17-alpha-hydroxylase/17,20 lyase (CYP17A1).